A 258-amino-acid polypeptide reads, in one-letter code: Thiazole synthase (258 aa).

Lysine 98 acts as the Schiff-base intermediate with DXP in catalysis. 1-deoxy-D-xylulose 5-phosphate-binding positions include glycine 159, 185 to 186, and 207 to 208; these read AG and NT.

It belongs to the ThiG family. Homotetramer. Forms heterodimers with either ThiH or ThiS.

It is found in the cytoplasm. The enzyme catalyses [ThiS sulfur-carrier protein]-C-terminal-Gly-aminoethanethioate + 2-iminoacetate + 1-deoxy-D-xylulose 5-phosphate = [ThiS sulfur-carrier protein]-C-terminal Gly-Gly + 2-[(2R,5Z)-2-carboxy-4-methylthiazol-5(2H)-ylidene]ethyl phosphate + 2 H2O + H(+). It participates in cofactor biosynthesis; thiamine diphosphate biosynthesis. Functionally, catalyzes the rearrangement of 1-deoxy-D-xylulose 5-phosphate (DXP) to produce the thiazole phosphate moiety of thiamine. Sulfur is provided by the thiocarboxylate moiety of the carrier protein ThiS. In vitro, sulfur can be provided by H(2)S. The polypeptide is Thiazole synthase (Bacillus cereus (strain ZK / E33L)).